Reading from the N-terminus, the 192-residue chain is uncharacterized protein (192 aa).

The protein to A.aeolicus AQ_054.

This is an uncharacterized protein from Thermotoga maritima (strain ATCC 43589 / DSM 3109 / JCM 10099 / NBRC 100826 / MSB8).